We begin with the raw amino-acid sequence, 326 residues long: Inactive peptidyl-prolyl cis-trans isomerase FKBP6 (326 aa).

Positions 53–142 (DASVLVKYSG…LFEIELLDFL (90 aa)) constitute a PPIase FKBP-type domain. TPR repeat units follow at residues 170-203 (AATE…LHRR), 218-251 (LLVF…DRKN), and 252-285 (AKAL…QPFN).

Belongs to the FKBP6 family. Interacts with HSP72/HSPA2 and CLTC. Interacts with GAPDH; leading to inhibit GAPDH catalytic activity. Interacts (via TPR repeats) with HSP90.

The protein localises to the cytoplasm. Its subcellular location is the cytosol. The protein resides in the nucleus. In terms of biological role, co-chaperone required during spermatogenesis to repress transposable elements and prevent their mobilization, which is essential for the germline integrity. Acts via the piRNA metabolic process, which mediates the repression of transposable elements during meiosis by forming complexes composed of piRNAs and Piwi proteins and govern the methylation and subsequent repression of transposons. Acts as a co-chaperone via its interaction with HSP90 and is required for the piRNA amplification process, the secondary piRNA biogenesis. May be required together with HSP90 in removal of 16 nucleotide ping-pong by-products from Piwi complexes, possibly facilitating turnover of Piwi complexes. The chain is Inactive peptidyl-prolyl cis-trans isomerase FKBP6 (FKBP6) from Bos taurus (Bovine).